We begin with the raw amino-acid sequence, 316 residues long: Lys-63-specific deubiquitinase BRCC36 (316 aa).

Ala2 bears the N-acetylalanine mark. The 168-residue stretch at 12 to 179 (VHLESDAFLV…YTCFQSIQAQ (168 aa)) folds into the MPN domain. Zn(2+) is bound by residues His122, His124, and Asp135. The JAMM motif motif lies at 122–135 (HSHPHITVWPSHVD). Ser258 is modified (phosphoserine).

The protein belongs to the peptidase M67A family. BRCC36 subfamily. As to quaternary structure, component of the ARISC complex, at least composed of UIMC1/RAP80, ABRAXAS1, BRCC3/BRCC36, BABAM2 and BABAM1/NBA1. Component of the BRCA1-A complex, at least composed of BRCA1, BARD1, UIMC1/RAP80, ABRAXAS1, BRCC3/BRCC36, BABAM2 and BABAM1/NBA1. In the BRCA1-A complex, interacts directly with ABRAXAS1 and BABAM2. Component of the BRISC complex, at least composed of ABRAXAS2, BRCC3/BRCC36, BABAM2 and BABAM1/NBA1. Identified in a complex with SHMT2 and the other subunits of the BRISC complex. In the BRISC complex, interacts directly with ABRAXAS2. Identified in a complex with ABRAXAS2 and NUMA1. The BRISC complex interacts with the CSN complex. Component of the BRCA1/BRCA2 containing complex (BRCC), which also contains BRCA1, BRCA2, BARD1, BABAM2 and RAD51. BRCC is a ubiquitin E3 ligase complex that enhances cellular survival following DNA damage. Interacts with BRCA1. Binds polyubiquitin. Interacts with PWWP2B. Interacts with HDAC1; this interaction is enhanced in the presence of PWWP2B. Zn(2+) serves as cofactor.

It is found in the nucleus. The protein localises to the cytoplasm. The protein resides in the cytoskeleton. Its subcellular location is the spindle pole. Metalloprotease that specifically cleaves 'Lys-63'-linked polyubiquitin chains. Does not have activity toward 'Lys-48'-linked polyubiquitin chains. Component of the BRCA1-A complex, a complex that specifically recognizes 'Lys-63'-linked ubiquitinated histones H2A and H2AX at DNA lesions sites, leading to target the BRCA1-BARD1 heterodimer to sites of DNA damage at double-strand breaks (DSBs). In the BRCA1-A complex, it specifically removes 'Lys-63'-linked ubiquitin on histones H2A and H2AX, antagonizing the RNF8-dependent ubiquitination at double-strand breaks (DSBs). Catalytic subunit of the BRISC complex, a multiprotein complex that specifically cleaves 'Lys-63'-linked ubiquitin in various substrates. Mediates the specific 'Lys-63'-specific deubiquitination associated with the COP9 signalosome complex (CSN), via the interaction of the BRISC complex with the CSN complex. The BRISC complex is required for normal mitotic spindle assembly and microtubule attachment to kinetochores via its role in deubiquitinating NUMA1. Plays a role in interferon signaling via its role in the deubiquitination of the interferon receptor IFNAR1; deubiquitination increases IFNAR1 activity by enhancing its stability and cell surface expression. Acts as a regulator of the NLRP3 inflammasome by mediating deubiquitination of NLRP3, leading to NLRP3 inflammasome assembly. Down-regulates the response to bacterial lipopolysaccharide (LPS) via its role in IFNAR1 deubiquitination. Deubiquitinates HDAC1 and PWWP2B leading to their stabilization. In Callithrix jacchus (White-tufted-ear marmoset), this protein is Lys-63-specific deubiquitinase BRCC36 (BRCC3).